The sequence spans 7756 residues: Linear gramicidin synthase subunit C (7756 aa).

6 Carrier domains span residues Glu-977–Gln-1052, Ala-2042–Ser-2116, Ala-3557–Leu-3632, Ala-4621–Asp-4695, Ala-6141–Leu-6216, and Ala-7200–Val-7274. Ser-1012, Ser-2077, Ser-3592, Ser-4656, Ser-6176, and Ser-7235 each carry O-(pantetheine 4'-phosphoryl)serine.

Belongs to the ATP-dependent AMP-binding enzyme family. In terms of assembly, large multienzyme complex composed of 4 subunits; LgrA, LgrB, LgrC and LgrD. Pantetheine 4'-phosphate is required as a cofactor.

Functionally, activates the 7th to 12th amino acids (Val, D-Val, Trp, D-Leu, Xaa and D-Leu) in linear gramicidin and catalyzes the formation of the peptide bond between them. This enzyme is also responsible for the epimerization of the 8th (D-Val), the 10th (D-Leu) and 12th (D-Leu) amino acids. The 11th (Xaa) amino acid is Trp in linear gramicidin A; Phe in linear gramicidin B and Tyr in linear gramicidin C. The polypeptide is Linear gramicidin synthase subunit C (lgrC) (Brevibacillus parabrevis).